Reading from the N-terminus, the 1069-residue chain is MARASKREVSSDEAYSSEEEEQVNDQANVEEDDDELEAVARSAGSDEEDVAPDEAPVSDDEVVPVEDDAEEDEEDEEKAEISKREKARLKEMQKMKKQKIQQILDSQNASIDADMNNKGKGRIKYLLQQTELFAHFAKSDPSPSQKKGKGRGRHSSKLTEEEEDEECLKEEEGGIVGSGGTRLLTQPACIQGKLRDYQLAGLNWLIRLYENGINGILADEMGLGKTLQTISLLAYLHEYRGINGPHMVVAPKSTLGNWMNEIRRFCPVLRAVKFLGNPEERRHIREELLVAGKFDICVTSFEMAIKEKTTLRRFSWRYIIIDEAHRIKNENSLLSKTMRLFSTNYRLLITGTPLQNNLHELWALLNFLLPEVFSSAETFDEWFQISGENDQQEVVQQLHKVLRPFLLRRLKSDVEKGLPPKKETILKVGMSQMQKQYYKALLQKDLEVVNGGGERKRLLNIAMQLRKCCNHPYLFQGAEPGPPYTTGDHLVTNAGKMVLLDKLLPKLKDRDSRVLIFSQMTRLLDILEDYLMYRGYQYCRIDGNTGGDERDASIEAYNKPGSEKFVFLLSTRAGGLGINLATADVVILYDSDWNPQVDLQAQDRAHRIGQKKEVQVFRFCTENAIEAKVIERAYKKLALDALVIQQGRLAEQKTVNKDELLQMVRYGAEMVFSSKDSTITDEDIDRIIAKGEEATAELDAKMKKFTEDAIQFKMDDSADFYDFDDDNKDESKVDFKKIVSENWNDPPKRERKRNYSEVEYFKQTLRQGAPAKPKEPRIPRMPQLHDFQFFNIQRLTELYEKEVRYLMQAHQKTQMKDTIEVDEPEEVGDPLTAEEVEEKELLLEEGFSTWSRRDFNAFIRACEKYGRNDIKSIASEMEGKTEEEVERYAQVFQVRYKELNDYDRIIKNIERGEARISRKDEIMKAIGKKLDRYRNPWLELKIQYGQNKGKLYNEECDRFMICMVHKLGYGNWDELKAAFRTSPLFRFDWFVKSRTTQELARRCDTLIRLIEKENQEFDERERQARKEKKLSKSATPSKRPSGRQANESPSSLLKKRKQLSMDDYGKRRK.

Residues 1–10 (MARASKREVS) show a composition bias toward basic and acidic residues. Disordered regions lie at residues 1–93 (MARA…KEMQ) and 136–168 (FAKSDPSPSQKKGKGRGRHSSKLTEEEEDEECL). Acidic residues-rich tracts occupy residues 15–37 (YSSEEEEQVNDQANVEEDDDELE) and 45–78 (SDEEDVAPDEAPVSDDEVVPVEDDAEEDEEDEEK). Residues 79 to 93 (AEISKREKARLKEMQ) show a composition bias toward basic and acidic residues. The span at 146 to 156 (KKGKGRGRHSS) shows a compositional bias: basic residues. A Helicase ATP-binding domain is found at 206 to 371 (IRLYENGING…WALLNFLLPE (166 aa)). ATP is bound at residue 219–226 (DEMGLGKT). Positions 322 to 325 (DEAH) match the DEAH box motif. Positions 499–650 (LLDKLLPKLK…ALVIQQGRLA (152 aa)) constitute a Helicase C-terminal domain. 2 SANT domains span residues 845–897 (EGFS…VRYK) and 946–1007 (QNKG…DTLI). The segment at 1016 to 1069 (EFDERERQARKEKKLSKSATPSKRPSGRQANESPSSLLKKRKQLSMDDYGKRRK) is disordered. Residues 1032 to 1051 (KSATPSKRPSGRQANESPSS) are compositionally biased toward polar residues. Positions 1059–1069 (LSMDDYGKRRK) are enriched in basic and acidic residues.

The protein belongs to the SNF2/RAD54 helicase family. ISWI subfamily. Interacts with RLT1. Binds to FGT1. As to expression, highly expressed in growing tissues such as inflorescence and flower meristems, young leaves and floral organs. Expressed in roots, rosette and cauline leaves, stems, flowers, inflorescences and siliques.

The protein localises to the nucleus. Possesses intrinsic ATP-dependent nucleosome-remodeling activity. Constitutes the catalytic subunit of several complexes capable of forming ordered nucleosome arrays on chromatin. Involved in the formation of nucleosome distribution patterns. Required for the maintenance of the plant vegetative phase. In association with RLT1 or RLT2 may prevent the early activation of the vegetative-to-reproductive transition by regulating key genes that contribute to flower timing, such as FT, SEP1, SEP3, AGL8/FUL, SOC1 and FLC. Necessary to acquire heat stress (HS) memory. This Arabidopsis thaliana (Mouse-ear cress) protein is ISWI chromatin-remodeling complex ATPase CHR17.